We begin with the raw amino-acid sequence, 840 residues long: MTSGAPPTISTEKSRSKQLRKSSKRTASTVEGTEAKQMRGDTENRSDGEMDDVSTSSEIRHGNGFIENFRSQTGNSSRTTATNERIKKKLVIKNFKANANQNDVAMGDTNIDSTDGSVGRDWAVLSDNVFAILEDRKTVTTLEGLFSKVRSVCDKNQSKVLYDRLVAIVVQFAKSLKESLNAVEQVPLAEDNCEQYLEKFGQIWQAYPVKINLIRNIFLHLDRIALGATDTEILPLWECFMQIFQKTFFPNIFKEFKATKLFNALYMAMQKIMQRYPVDSPLRSLVDMLQTVHVSEEFAKFLISQLREHYNNERIDKVPKMNCNDYMEYCEDQINRYSQLVKVNFDEPSALKDVQATVTNCLIQQAIPEILTHDFDDLIDSDNISDIGRMFNLCRQCVGGEDEVRTQFSKYLKKRGEKLIATCPDEDLVSELLAFKKKVDFIMTGSFKSANDPVKMRQCLSDAFESFVNKQVDRSAELISKHFHTLLHSSNKNVSDDTTLDQMVDEAIVLFRYLRGKDVFEAYYKRGLAKRLFLERSASVDAEKMVLCKLKTECGSAFTYKLEGMFKDMDASENYGRLFNQYLEHMNKEKANFTARVITPEYWPTYDTYEINIPKEMRDTLTDYQDFYRVQHGNRNVKWHHGLASAVISASFRPGCKKELIATMYQTVILLLFNKCETWTVAEIVEHTKILEIEVVKNVLALLGGRDKPKVLQRVEGGGSEKKEGTVENLKNEKFVVNSKFTEKRCRVRIAQVNIKTAVEETKEVKEEVNSDRQYKIDAAVVRIMKARKQLNHQTLMTELLQQLRFPVSTADIKKRLESLIEREYISRDPEEASSYNYVA.

Residues 1-11 are compositionally biased toward polar residues; sequence MTSGAPPTIST. The segment at 1–82 is disordered; the sequence is MTSGAPPTIS…TGNSSRTTAT (82 aa). Residues 33–48 show a composition bias toward basic and acidic residues; that stretch reads TEAKQMRGDTENRSDG. Polar residues predominate over residues 69-82; it reads FRSQTGNSSRTTAT. The region spanning 772–831 is the Cullin neddylation domain; the sequence is DRQYKIDAAVVRIMKARKQLNHQTLMTELLQQLRFPVSTADIKKRLESLIEREYISRDPE. K786 participates in a covalent cross-link: Glycyl lysine isopeptide (Lys-Gly) (interchain with G-Cter in NEDD8).

The protein belongs to the cullin family. In terms of assembly, part of an E3 ubiquitin-protein ligase complex including cul-4 and ddb-1. In terms of processing, neddylated. Deneddylated via its interaction with the COP9 signalosome (CSN) complex.

Its pathway is protein modification; protein ubiquitination. In terms of biological role, component of cullin-based E3 ubiquitin-protein ligase complexes which mediate the ubiquitination and subsequent proteasomal degradation of target proteins. The functional specificity of the E3 ubiquitin-protein ligase complex depends on the variable substrate recognition component. In association with ddb-1 directs ubiquitination of cdt-1 during S phase and is required for restraining DNA rereplication. Probably is involved in ubiquitination of cki-1. The chain is Cullin-4 (cul-4) from Caenorhabditis elegans.